A 544-amino-acid chain; its full sequence is MAEADPKMVTEPGAHGVAEEAMASTACDSGDESDSNSSSSTNSCSSSGSSSSGSSSSSSSSSSSSSSSSSSSSGSSGSSSNGSHLNRKKRVPEPSRRAQRRPSGKLFLDKLPQAVRNRVQALRNIQNECDKVDTLFLRAIHDLERKYAELNKPLYDKRFQIINAEYEPTEEECEWNSEEEFSGDEEMQDDTPNEMPPLEGEEEEESCNEKAEVKEEGTHVPEEVPEAKVEEEEAPKETPEVKTEEKDIPKEGAEEKAEEQESSKEIPEVKGEEKADSTDCIDIAPEEKEDVKEVTQANTENKDQPTEEFTPRAPAREAQKRVPETRPEEGVNIKRARKGKPKKEDPKGIPDYWLTVLKNVDKLGPMIQKCDEPILKFLSDVSLKFSNPGQPIGYTFEFHFLPNPYFRNELLMKTYIIRSKPDHYDPFFAWGWEIEECKGCKIDWRRGKDVTVTTTRSRPGITGEIEVQPRVVPNASFFNFFSPPEIPLIGKLEPREDAILDEDFEIGQILHDNVILKSIYYFTGEINDPYYHDFRDYGNRKYYK.

Disordered regions lie at residues 1-109 (MAEA…LFLD) and 168-345 (PTEE…KKED). Residues 35 to 83 (SNSSSSTNSCSSSGSSSSGSSSSSSSSSSSSSSSSSSSSGSSGSSSNGS) are compositionally biased toward low complexity. Residues 168-192 (PTEEECEWNSEEEFSGDEEMQDDTP) are compositionally biased toward acidic residues. Composition is skewed to basic and acidic residues over residues 207-228 (CNEKAEVKEEGTHVPEEVPEAK), 235-277 (PKET…KADS), and 314-332 (PAREAQKRVPETRPEEGVN).

It belongs to the nucleosome assembly protein (NAP) family. In terms of tissue distribution, expressed in brain.

The protein resides in the nucleus. It is found in the cytoplasm. The chain is Nucleosome assembly protein 1-like 3 (Nap1l3) from Mus musculus (Mouse).